The chain runs to 182 residues: Sperm acrosome-associated protein 7 (182 aa).

An N-terminal signal peptide occupies residues 1-24 (MAANRGSRTFLSVFLLCCWQGAEL). Residue asparagine 40 is glycosylated (N-linked (GlcNAc...) asparagine). The span at 112–140 (LPTKEESGKNDRSTVANLHDHSSQTKHEP) shows a compositional bias: basic and acidic residues. Residues 112-154 (LPTKEESGKNDRSTVANLHDHSSQTKHEPPSSPEGKGSSNDDV) are disordered.

Testis-specific. Expressed in zygotene and pachytene spermatocytes, round spermatids, elongating spermatids and spermatozoa (at protein level). Testis-specific.

It localises to the secreted. It is found in the cytoplasmic vesicle. The protein resides in the secretory vesicle. Its subcellular location is the acrosome lumen. Its function is as follows. Involved in fertilization. Seems not to play a direct role in sperm-egg binding or gamete fusion. This Mus musculus (Mouse) protein is Sperm acrosome-associated protein 7.